Consider the following 334-residue polypeptide: Protein-methionine-sulfoxide reductase catalytic subunit MsrP (334 aa).

The tat-type signal signal peptide spans Met1–Ala44. Mo-molybdopterin-binding positions include Asn88, Tyr91–Glu92, Cys146, Thr181, Asn233, Arg238, and Gly249–Lys251.

The protein belongs to the MsrP family. Heterodimer of a catalytic subunit (MsrP) and a heme-binding subunit (MsrQ). Requires Mo-molybdopterin as cofactor. Predicted to be exported by the Tat system. The position of the signal peptide cleavage has not been experimentally proven.

The protein resides in the periplasm. It catalyses the reaction L-methionyl-[protein] + a quinone + H2O = L-methionyl-(S)-S-oxide-[protein] + a quinol. The catalysed reaction is L-methionyl-[protein] + a quinone + H2O = L-methionyl-(R)-S-oxide-[protein] + a quinol. Functionally, part of the MsrPQ system that repairs oxidized periplasmic proteins containing methionine sulfoxide residues (Met-O), using respiratory chain electrons. Thus protects these proteins from oxidative-stress damage caused by reactive species of oxygen and chlorine generated by the host defense mechanisms. MsrPQ is essential for the maintenance of envelope integrity under bleach stress, rescuing a wide series of structurally unrelated periplasmic proteins from methionine oxidation, including the primary periplasmic chaperone SurA and the lipoprotein Pal. The catalytic subunit MsrP is non-stereospecific, being able to reduce both (R-) and (S-) diastereoisomers of methionine sulfoxide. The sequence is that of Protein-methionine-sulfoxide reductase catalytic subunit MsrP from Shigella sonnei (strain Ss046).